The primary structure comprises 596 residues: Elongation factor 4 (596 aa).

Residues 2–184 form the tr-type G domain; sequence RNIRNFSIIA…AIVHRIPPPK (183 aa). Residues 14-19 and 131-134 each bind GTP; these read DHGKST and NKID.

It belongs to the TRAFAC class translation factor GTPase superfamily. Classic translation factor GTPase family. LepA subfamily.

The protein localises to the cell inner membrane. The catalysed reaction is GTP + H2O = GDP + phosphate + H(+). Its function is as follows. Required for accurate and efficient protein synthesis under certain stress conditions. May act as a fidelity factor of the translation reaction, by catalyzing a one-codon backward translocation of tRNAs on improperly translocated ribosomes. Back-translocation proceeds from a post-translocation (POST) complex to a pre-translocation (PRE) complex, thus giving elongation factor G a second chance to translocate the tRNAs correctly. Binds to ribosomes in a GTP-dependent manner. This chain is Elongation factor 4, found in Xanthomonas euvesicatoria pv. vesicatoria (strain 85-10) (Xanthomonas campestris pv. vesicatoria).